Consider the following 512-residue polypeptide: Alpha-1B-glycoprotein (512 aa).

Residues 1–18 form the signal peptide; it reads MSLLATVLLLWGFTLGPG. Ig-like V-type domains follow at residues 22–126, 127–219, 220–312, 313–415, and 416–512; these read MLDS…VTGK, EPLP…MYAS, QAPP…PVEL, MWSD…LRVN, and GPPP…IVEG. Residues Asn44, Asn89, and Asn192 are each glycosylated (N-linked (GlcNAc...) asparagine). 5 cysteine pairs are disulfide-bonded: Cys49–Cys96, Cys153–Cys195, Cys245–Cys292, Cys343–Cys392, and Cys441–Cys488. 4 N-linked (GlcNAc...) asparagine glycosylation sites follow: Asn369, Asn381, Asn389, and Asn485.

As to quaternary structure, interacts with CRISP3. Expressed in the liver hepatocytes of male and female GH transgenic mice and in the liver of female, but not of male, non-transgenic mice.

The protein resides in the secreted. This is Alpha-1B-glycoprotein (A1bg) from Mus musculus (Mouse).